A 604-amino-acid polypeptide reads, in one-letter code: Elongation factor 4 (604 aa).

Residues 9 to 191 (DAIRNFCIIA…AVISRVPAPA (183 aa)) form the tr-type G domain. GTP contacts are provided by residues 21 to 26 (DHGKST) and 138 to 141 (NKID).

It belongs to the TRAFAC class translation factor GTPase superfamily. Classic translation factor GTPase family. LepA subfamily.

It is found in the cell inner membrane. The enzyme catalyses GTP + H2O = GDP + phosphate + H(+). Required for accurate and efficient protein synthesis under certain stress conditions. May act as a fidelity factor of the translation reaction, by catalyzing a one-codon backward translocation of tRNAs on improperly translocated ribosomes. Back-translocation proceeds from a post-translocation (POST) complex to a pre-translocation (PRE) complex, thus giving elongation factor G a second chance to translocate the tRNAs correctly. Binds to ribosomes in a GTP-dependent manner. The protein is Elongation factor 4 of Prosthecochloris aestuarii (strain DSM 271 / SK 413).